A 178-amino-acid chain; its full sequence is Large ribosomal subunit protein bL25 (178 aa).

It belongs to the bacterial ribosomal protein bL25 family. CTC subfamily. Part of the 50S ribosomal subunit; part of the 5S rRNA/L5/L18/L25 subcomplex. Contacts the 5S rRNA. Binds to the 5S rRNA independently of L5 and L18.

In terms of biological role, this is one of the proteins that binds to the 5S RNA in the ribosome where it forms part of the central protuberance. The sequence is that of Large ribosomal subunit protein bL25 from Helicobacter acinonychis (strain Sheeba).